The primary structure comprises 3122 residues: Laminin subunit alpha-2 (3122 aa).

The N-terminal stretch at 1–22 (MPGAAGVLLLLLLSGGLGGVQA) is a signal peptide. The Laminin N-terminal domain occupies 35–286 (QQRGLFPAVL…SVKDISVGGM (252 aa)). N-linked (GlcNAc...) asparagine glycosylation is found at Asn55 and Asn89. Disulfide bonds link Cys287–Cys296, Cys289–Cys307, Cys309–Cys318, Cys321–Cys341, Cys344–Cys353, and Cys346–Cys378. Laminin EGF-like domains follow at residues 287–343 (CICY…ECEA), 344–413 (CNCH…PCQP), 414–468 (CHCD…DCKA), and 469–517 (CNCS…GCDE). Asn303 is a glycosylation site (N-linked (GlcNAc...) asparagine). Asn363 and Asn380 each carry an N-linked (GlcNAc...) asparagine glycan. Intrachain disulfides connect Cys381-Cys390, Cys393-Cys411, Cys414-Cys426, Cys416-Cys442, Cys444-Cys453, Cys456-Cys466, Cys469-Cys482, Cys471-Cys486, Cys488-Cys497, and Cys500-Cys515. N-linked (GlcNAc...) asparagine glycosylation is present at Asn470. The 10-residue stretch at 518-527 (CFCSGVSNRC) folds into the Laminin EGF-like 5; first part domain. Residues 531 to 723 (YWTYGKIQDM…DGSIAAAVEV (193 aa)) form the Laminin IV type A 1 domain. Residues 724 to 756 (CQCPPGYTGSSCESCWPRHRRVNGTIFGGICEP) enclose the Laminin EGF-like 5; second part domain. Residue Asn746 is glycosylated (N-linked (GlcNAc...) asparagine). 32 cysteine pairs are disulfide-bonded: Cys757/Cys766, Cys759/Cys773, Cys776/Cys785, Cys788/Cys804, Cys807/Cys822, Cys809/Cys832, Cys835/Cys844, Cys847/Cys862, Cys865/Cys879, Cys867/Cys886, Cys889/Cys898, Cys901/Cys915, Cys918/Cys930, Cys920/Cys937, Cys939/Cys948, Cys951/Cys964, Cys967/Cys979, Cys969/Cys985, Cys987/Cys996, Cys999/Cys1011, Cys1014/Cys1023, Cys1016/Cys1030, Cys1032/Cys1041, Cys1044/Cys1057, Cys1060/Cys1072, Cys1062/Cys1079, Cys1081/Cys1090, Cys1093/Cys1103, Cys1106/Cys1118, Cys1108/Cys1134, Cys1136/Cys1145, and Cys1148/Cys1163. Laminin EGF-like domains are found at residues 757–806 (CQCF…DCQP), 807–864 (CACP…SCQP), 865–917 (CQCN…NCQP), 918–966 (CRCN…GCVP), 967–1013 (CNCN…GCTA), 1014–1059 (CECS…GCKA), 1060–1105 (CNCS…RCNL), and 1106–1165 (CDCF…GCSS). Asn1061 carries an N-linked (GlcNAc...) asparagine glycan. A Laminin EGF-like 14; first part domain is found at 1166–1175 (CYCFGTTTQC). Residues 1176 to 1379 (SEAKGLIRTW…MTPPADLIEK (204 aa)) enclose the Laminin IV type A 2 domain. The Laminin EGF-like 14; second part domain maps to 1380–1419 (CDCPLGYSGLSCEACLPGFYRLRSQPGGRTPGPTLGTCVP). Intrachain disulfides connect Cys1420-Cys1429, Cys1422-Cys1436, Cys1439-Cys1448, Cys1451-Cys1466, Cys1469-Cys1484, Cys1471-Cys1494, Cys1497-Cys1506, Cys1509-Cys1524, Cys1527-Cys1539, Cys1529-Cys1546, Cys1548-Cys1557, and Cys1560-Cys1571. Laminin EGF-like domains lie at 1420–1468 (CQCN…DCQQ), 1469–1526 (CACP…SCQE), and 1527–1573 (CECD…ECVF). The segment at 1574-2144 (CGDECTGLLL…NQARKQANSI (571 aa)) is domain II and I. N-linked (GlcNAc...) asparagine glycans are attached at residues Asn1597, Asn1614, Asn1700, Asn1810, Asn1901, Asn1916, Asn1920, Asn2017, Asn2028, Asn2045, Asn2126, and Asn2240. Residues 1630-2150 (ERLIQLAEGN…ANSIKVSVSS (521 aa)) are a coiled coil. Laminin G-like domains are found at residues 2145 to 2328 (KVSV…CKGC), 2340 to 2521 (TIQF…TKGC), 2526 to 2710 (VYTV…IGRC), 2763 to 2934 (SKQF…VGTC), and 2939 to 3110 (QRGT…KALE). Cys2302 and Cys2328 form a disulfide bridge. Residues Asn2360, Asn2435, and Asn2478 are each glycosylated (N-linked (GlcNAc...) asparagine). An intrachain disulfide couples Cys2495 to Cys2521. N-linked (GlcNAc...) asparagine glycosylation is found at Asn2551, Asn2558, and Asn2648. An intrachain disulfide couples Cys2683 to Cys2710. 2 N-linked (GlcNAc...) asparagine glycosylation sites follow: Asn2868 and Asn2893. A disulfide bridge connects residues Cys2909 and Cys2934. Polar residues predominate over residues 3043 to 3060 (GNQVEAQSPNPASTSADT). The disordered stretch occupies residues 3043 to 3063 (GNQVEAQSPNPASTSADTNDP).

Laminin is a complex glycoprotein, consisting of three different polypeptide chains (alpha, beta, gamma), which are bound to each other by disulfide bonds into a cross-shaped molecule comprising one long and three short arms with globules at each end. Alpha-2 is a subunit of laminin-2 (laminin-211 or merosin), laminin-4 (laminin-221 or S-merosin) and laminin-12 (laminin-213). Interacts with FBLN1, FBLN2 and NID2. In terms of tissue distribution, placenta, striated muscle, peripheral nerve, cardiac muscle, pancreas, lung, spleen, kidney, adrenal gland, skin, testis, meninges, choroid plexus, and some other regions of the brain; not in liver, thymus and bone.

It localises to the secreted. It is found in the extracellular space. The protein localises to the extracellular matrix. Its subcellular location is the basement membrane. Its function is as follows. Binding to cells via a high affinity receptor, laminin is thought to mediate the attachment, migration and organization of cells into tissues during embryonic development by interacting with other extracellular matrix components. This chain is Laminin subunit alpha-2 (LAMA2), found in Homo sapiens (Human).